The chain runs to 478 residues: Sulfate adenylyltransferase subunit 1 (478 aa).

Residues 28-244 (KTMLRFLTCG…LESVDVVNAR (217 aa)) enclose the tr-type G domain. The segment at 37–44 (GSVDDGKS) is G1. 37–44 (GSVDDGKS) contributes to the GTP binding site. The interval 95-99 (GITID) is G2. The tract at residues 116 to 119 (DTPG) is G3. GTP contacts are provided by residues 116-120 (DTPGH) and 171-174 (NKMD). A G4 region spans residues 171–174 (NKMD). A G5 region spans residues 209–211 (SAL).

This sequence belongs to the TRAFAC class translation factor GTPase superfamily. Classic translation factor GTPase family. CysN/NodQ subfamily. As to quaternary structure, heterodimer composed of CysD, the smaller subunit, and CysN.

The enzyme catalyses sulfate + ATP + H(+) = adenosine 5'-phosphosulfate + diphosphate. It functions in the pathway sulfur metabolism; hydrogen sulfide biosynthesis; sulfite from sulfate: step 1/3. With CysD forms the ATP sulfurylase (ATPS) that catalyzes the adenylation of sulfate producing adenosine 5'-phosphosulfate (APS) and diphosphate, the first enzymatic step in sulfur assimilation pathway. APS synthesis involves the formation of a high-energy phosphoric-sulfuric acid anhydride bond driven by GTP hydrolysis by CysN coupled to ATP hydrolysis by CysD. In Yersinia pseudotuberculosis serotype O:1b (strain IP 31758), this protein is Sulfate adenylyltransferase subunit 1.